The following is a 325-amino-acid chain: Melanocortin receptor 5 (325 aa).

Over M1–G37 the chain is Extracellular. N-linked (GlcNAc...) asparagine glycosylation is found at N2, N15, and N28. A helical transmembrane segment spans residues I38–I61. Residues V62–F73 are Cytoplasmic-facing. Residues F74–Y97 traverse the membrane as a helical segment. The Extracellular portion of the chain corresponds to L98–I114. Residues D115–V138 traverse the membrane as a helical segment. Topologically, residues D139–T155 are cytoplasmic. A helical membrane pass occupies residues A156 to I179. The Extracellular segment spans residues Y180 to V186. The helical transmembrane segment at I187 to L211 threads the bilayer. The Cytoplasmic segment spans residues A212–T239. The helical transmembrane segment at L240–P265 threads the bilayer. The Extracellular portion of the chain corresponds to Q266–F273. A helical membrane pass occupies residues M274 to L297. At R298 to Y325 the chain is on the cytoplasmic side. S-palmitoyl cysteine attachment occurs at residues C311 and C312.

The protein belongs to the G-protein coupled receptor 1 family. In terms of tissue distribution, very low expression levels is detected in brain, while high levels are found in adrenals, stomach, lung and spleen.

Its subcellular location is the cell membrane. In terms of biological role, receptor for MSH (alpha, beta and gamma) and ACTH. The activity of this receptor is mediated by G proteins which activate adenylate cyclase. This receptor is a possible mediator of the immunomodulation properties of melanocortins. The protein is Melanocortin receptor 5 (Mc5r) of Rattus norvegicus (Rat).